Consider the following 419-residue polypeptide: UDP-N-acetylglucosamine 1-carboxyvinyltransferase (419 aa).

Residue 22 to 23 (KN) participates in phosphoenolpyruvate binding. Residue R91 participates in UDP-N-acetyl-alpha-D-glucosamine binding. C115 functions as the Proton donor in the catalytic mechanism. The residue at position 115 (C115) is a 2-(S-cysteinyl)pyruvic acid O-phosphothioketal. Residues 120–124 (RPVDL), 160–163 (KVSV), D305, and I327 each bind UDP-N-acetyl-alpha-D-glucosamine.

Belongs to the EPSP synthase family. MurA subfamily.

The protein localises to the cytoplasm. It carries out the reaction phosphoenolpyruvate + UDP-N-acetyl-alpha-D-glucosamine = UDP-N-acetyl-3-O-(1-carboxyvinyl)-alpha-D-glucosamine + phosphate. The protein operates within cell wall biogenesis; peptidoglycan biosynthesis. Cell wall formation. Adds enolpyruvyl to UDP-N-acetylglucosamine. The polypeptide is UDP-N-acetylglucosamine 1-carboxyvinyltransferase (Tolumonas auensis (strain DSM 9187 / NBRC 110442 / TA 4)).